The chain runs to 455 residues: MISVFDMFKVGIGPSSSHTVGPMKAGKQFIDDLIKRNQFEQTTEIHVDVYGSLSMTGRGHSTDIAIIMGLAGYLPHNVDIDMISGFIEKVKQTALLPINVGQKIVKFDFENNLIFHRTFLKLHENGMTITALDENRTELYRQTYYSIGGGFIVDEAHFGKEEKNTVQVPYPYKNAEDILKHCSDNGLMLSTVMLENEIALNGKEAVSAHLENVWKTMQACIEHGIHTEGILPGPLRVPRRAASLYRALQANTNLSNDPMRVIDWVNMFALAVNEENAAGGRVVTAPTNGACGIIPAVLAYYEKFISPLTPEIIERYLLAAGMIGSLYKMNASISGAEVGCQGEVGVACSMAAAGLAEILGGNPLQVCIAAEIAMEHNLGLTCDPVGGQVQVPCIERNAIASVKAINASRMALRRTTNPRVTLDKVIETMYETGKDMNAKYRETSQGGLAVKIVCN.

This sequence belongs to the iron-sulfur dependent L-serine dehydratase family. It depends on [4Fe-4S] cluster as a cofactor.

The enzyme catalyses L-serine = pyruvate + NH4(+). It participates in carbohydrate biosynthesis; gluconeogenesis. This Haemophilus influenzae (strain ATCC 51907 / DSM 11121 / KW20 / Rd) protein is L-serine dehydratase (sdaA).